A 315-amino-acid chain; its full sequence is Cytochrome c biogenesis protein CcsA (315 aa).

The next 7 membrane-spanning stretches (helical) occupy residues 14–34 (VVSL…ISFW), 72–92 (ISNL…AQLF), 101–121 (IVSA…SFVL), 146–166 (VIMC…GVFL), 221–241 (SITA…VWAN), 255–272 (TWAL…HTRL), and 282–302 (AILA…VNLL).

Belongs to the CcmF/CycK/Ccl1/NrfE/CcsA family. In terms of assembly, may interact with ccs1.

Its subcellular location is the cellular thylakoid membrane. Its function is as follows. Required during biogenesis of c-type cytochromes (cytochrome c6 and cytochrome f) at the step of heme attachment. The polypeptide is Cytochrome c biogenesis protein CcsA (Prochlorococcus marinus (strain NATL1A)).